Here is a 206-residue protein sequence, read N- to C-terminus: Pyridoxal 5'-phosphate synthase subunit PdxT (206 aa).

59-61 is a binding site for L-glutamine; the sequence is GES. Cysteine 91 functions as the Nucleophile in the catalytic mechanism. Residues arginine 123 and 151 to 152 contribute to the L-glutamine site; that span reads IR. Active-site charge relay system residues include histidine 187 and glutamate 189.

This sequence belongs to the glutaminase PdxT/SNO family. As to quaternary structure, in the presence of PdxS, forms a dodecamer of heterodimers. Only shows activity in the heterodimer.

The catalysed reaction is aldehydo-D-ribose 5-phosphate + D-glyceraldehyde 3-phosphate + L-glutamine = pyridoxal 5'-phosphate + L-glutamate + phosphate + 3 H2O + H(+). The enzyme catalyses L-glutamine + H2O = L-glutamate + NH4(+). The protein operates within cofactor biosynthesis; pyridoxal 5'-phosphate biosynthesis. Functionally, catalyzes the hydrolysis of glutamine to glutamate and ammonia as part of the biosynthesis of pyridoxal 5'-phosphate. The resulting ammonia molecule is channeled to the active site of PdxS. This chain is Pyridoxal 5'-phosphate synthase subunit PdxT, found in Mycobacterium sp. (strain JLS).